Consider the following 527-residue polypeptide: Catalase (527 aa).

Position 2 is an N-acetylalanine (A2). A Phosphoserine modification is found at S9. The residue at position 13 (K13) is an N6-succinyllysine. Active-site residues include H75 and N148. Residues H194, S201, R203, and N213 each contribute to the NADP(+) site. K221 is subject to N6-succinyllysine. Position 233 is an N6-acetyllysine (K233). NADP(+) contacts are provided by K237, W303, H305, and K306. K306 is subject to N6-acetyllysine; alternate. K306 bears the N6-succinyllysine; alternate mark. Y358 provides a ligand contact to heme. A phosphoserine mark is found at S417 and S422. K480 bears the N6-acetyllysine; alternate mark. N6-succinyllysine; alternate is present on K480. Residue K499 is modified to N6-acetyllysine. A Phosphothreonine modification is found at T511. 2 positions are modified to phosphoserine: S515 and S517. The short motif at 524–527 (KANL) is the Microbody targeting signal; atypical element.

It belongs to the catalase family. As to quaternary structure, homotetramer. Interacts (via microbody targeting signal) with PEX5, monomeric form interacts with PEX5, leading to its translocation into peroxisomes. Heme serves as cofactor. The cofactor is NADP(+).

The protein resides in the peroxisome matrix. The enzyme catalyses 2 H2O2 = O2 + 2 H2O. Catalyzes the degradation of hydrogen peroxide (H(2)O(2)) generated by peroxisomal oxidases to water and oxygen, thereby protecting cells from the toxic effects of hydrogen peroxide. Promotes growth of cells including T-cells, B-cells, myeloid leukemia cells, melanoma cells, mastocytoma cells and normal and transformed fibroblast cells. The polypeptide is Catalase (CAT) (Pongo abelii (Sumatran orangutan)).